The sequence spans 222 residues: Kinetochore protein Spc25 (222 aa).

Residues 51 to 86 (RHQRKVGKLQKVLMERREELDKRVSFIEELDRELEA) adopt a coiled-coil conformation.

The protein belongs to the SPC25 family. Component of the Ndc80 complex, which is composed of Ndc80, Nuf2 and Spc25.

It is found in the nucleus. It localises to the chromosome. The protein localises to the centromere. The protein resides in the kinetochore. Functionally, acts as a component of the essential kinetochore-associated Ndc80 complex, which is required for chromosome segregation and spindle checkpoint activity during meiosis and mitosis. Required for kinetochore integrity and the organization of stable microtubule binding sites in the outer plate of the kinetochore. Participates in SAC signaling that responds specifically to disruptions in spindle microtubule dynamics. The NDC80 complex synergistically enhances the affinity of the SKA1 complex for microtubules and may allow the NDC80 complex to track depolymerizing microtubules. The protein is Kinetochore protein Spc25 of Drosophila simulans (Fruit fly).